A 59-amino-acid chain; its full sequence is Large ribosomal subunit protein uL30 (59 aa).

It belongs to the universal ribosomal protein uL30 family. In terms of assembly, part of the 50S ribosomal subunit.

The polypeptide is Large ribosomal subunit protein uL30 (Clostridium botulinum (strain 657 / Type Ba4)).